Consider the following 291-residue polypeptide: uncharacterized protein (291 aa).

Residues 1–82 (MEAEKETEQE…SYSSSPFETH (82 aa)) are disordered. 2 stretches are compositionally biased toward low complexity: residues 28-43 (HSHS…ISAS) and 59-78 (STSS…SSSP).

This is an uncharacterized protein from Arabidopsis thaliana (Mouse-ear cress).